The chain runs to 333 residues: Protoheme IX farnesyltransferase (333 aa).

Transmembrane regions (helical) follow at residues 36-56 (LIPL…GWPL), 61-81 (LVCT…LNCL), 107-127 (AAFA…VSGV), 130-150 (LAAG…TALL), 158-178 (IVIG…AATG), 186-206 (WLFA…ALLL), 243-263 (FLGV…LLPF), and 284-304 (AKGL…LLVF).

Belongs to the UbiA prenyltransferase family. Protoheme IX farnesyltransferase subfamily.

Its subcellular location is the cell inner membrane. It catalyses the reaction heme b + (2E,6E)-farnesyl diphosphate + H2O = Fe(II)-heme o + diphosphate. It functions in the pathway porphyrin-containing compound metabolism; heme O biosynthesis; heme O from protoheme: step 1/1. Its function is as follows. Converts heme B (protoheme IX) to heme O by substitution of the vinyl group on carbon 2 of heme B porphyrin ring with a hydroxyethyl farnesyl side group. The polypeptide is Protoheme IX farnesyltransferase (Synechococcus sp. (strain WH7803)).